The chain runs to 138 residues: Nucleoside diphosphate kinase (138 aa).

ATP contacts are provided by Lys-9, Phe-57, Arg-85, Thr-91, Arg-102, and Asn-112. The active-site Pros-phosphohistidine intermediate is the His-115.

Belongs to the NDK family. As to quaternary structure, homotetramer. The cofactor is Mg(2+).

It is found in the cytoplasm. It carries out the reaction a 2'-deoxyribonucleoside 5'-diphosphate + ATP = a 2'-deoxyribonucleoside 5'-triphosphate + ADP. The enzyme catalyses a ribonucleoside 5'-diphosphate + ATP = a ribonucleoside 5'-triphosphate + ADP. Major role in the synthesis of nucleoside triphosphates other than ATP. The ATP gamma phosphate is transferred to the NDP beta phosphate via a ping-pong mechanism, using a phosphorylated active-site intermediate. The chain is Nucleoside diphosphate kinase from Desulforapulum autotrophicum (strain ATCC 43914 / DSM 3382 / VKM B-1955 / HRM2) (Desulfobacterium autotrophicum).